Consider the following 195-residue polypeptide: MPYGTRYPTLAFHTGGVGESDDGMPPQPFETFCYDSALLQAKIENFNIVPYTSVLPKELFGNILPVDQCTKFFKHGAVLEVIMAGRGATVTDGTQAIATGVGICWGKDKNGELIGGWAAEYVEFFPTWIDDEIAESHAKMWLKKSLQHELDLRSVSKHSEFQYFHNYINIRKKFGFCLTALGFLNFENAAPAVIQ.

A Pyruvic acid (Ser) modification is found at serine 53.

The protein belongs to the pyruvoyl-dependent arginine decarboxylase family. As to quaternary structure, trimer of an alpha-beta dimer. It depends on pyruvate as a cofactor.

The protein localises to the cytoplasm. The catalysed reaction is L-arginine + H(+) = agmatine + CO2. In terms of biological role, part of the AaxABC system, catalyzes the decarboxylation of L-arginine. The arginine uptake by the bacterium in the macrophage may be a virulence factor against the host innate immune response. In Chlamydia trachomatis serovar L2 (strain ATCC VR-902B / DSM 19102 / 434/Bu), this protein is Pyruvoyl-dependent arginine decarboxylase AaxB (aaxB).